The sequence spans 626 residues: 4-hydroxy-3-methylbut-2-en-1-yl diphosphate synthase (flavodoxin) (626 aa).

4 residues coordinate [4Fe-4S] cluster: Cys521, Cys524, Cys555, and Glu562.

It belongs to the IspG family. Requires [4Fe-4S] cluster as cofactor.

It catalyses the reaction (2E)-4-hydroxy-3-methylbut-2-enyl diphosphate + oxidized [flavodoxin] + H2O + 2 H(+) = 2-C-methyl-D-erythritol 2,4-cyclic diphosphate + reduced [flavodoxin]. It participates in isoprenoid biosynthesis; isopentenyl diphosphate biosynthesis via DXP pathway; isopentenyl diphosphate from 1-deoxy-D-xylulose 5-phosphate: step 5/6. Converts 2C-methyl-D-erythritol 2,4-cyclodiphosphate (ME-2,4cPP) into 1-hydroxy-2-methyl-2-(E)-butenyl 4-diphosphate. This is 4-hydroxy-3-methylbut-2-en-1-yl diphosphate synthase (flavodoxin) from Bacteroides fragilis (strain YCH46).